Consider the following 144-residue polypeptide: Maximins 3/H11 type 1 (144 aa).

The signal sequence occupies residues 1 to 18 (MNFKYIVAVSFLIASAYA). 2 consecutive propeptides follow at residues 19-43 (RSVQ…REIR) and 73-122 (RTAE…KKEK). At isoleucine 143 the chain carries Isoleucine amide.

This sequence belongs to the bombinin family. As to expression, expressed by the skin glands.

The protein localises to the secreted. In terms of biological role, maximin-3 shows antibacterial activity against both Gram-positive and Gram-negative bacteria. It also shows antimicrobial activity against the fungus C.albicans, but not against A.flavus nor P.uticale. It has little hemolytic activity. It possess a significant cytotoxicity against tumor cell lines. It possess a significant anti-HIV activity. It shows high spermicidal activity. Maximin-H11 shows antimicrobial activity against bacteria and against the fungus C.albicans. Shows strong hemolytic activity. This is Maximins 3/H11 type 1 from Bombina maxima (Giant fire-bellied toad).